A 260-amino-acid chain; its full sequence is MADS-box transcription factor 29 (260 aa).

Residues 1 to 61 (MGRGKIEIKR…GKMFEYCSPT (61 aa)) form the MADS-box domain. One can recognise a K-box domain in the interval 85 to 175 (DQQIFVEMTR…CRMINENHHQ (91 aa)).

In terms of tissue distribution, expressed in developing seeds.

Its subcellular location is the nucleus. Probable transcription factor. This chain is MADS-box transcription factor 29 (MADS29), found in Oryza sativa subsp. japonica (Rice).